Reading from the N-terminus, the 352-residue chain is Extracellular minor metalloprotease (352 aa).

2 disordered regions span residues 41–86 (GNKP…QPRR) and 144–164 (TARSSTVSPSPSTLVGHELTH). Residues 48–57 (PTEKNARAGE) are compositionally biased toward basic and acidic residues. Composition is skewed to low complexity over residues 71–85 (ARQTGAQGGAAQQPR) and 144–156 (TARSSTVSPSPST). His-160 serves as a coordination point for Zn(2+). Residue Glu-161 is part of the active site. Positions 164 and 184 each coordinate Zn(2+). His-262 functions as the Proton donor in the catalytic mechanism. Positions 303–325 (TPTSDHLRPRHGETRAGLRTKRG) are disordered. The span at 304–325 (PTSDHLRPRHGETRAGLRTKRG) shows a compositional bias: basic and acidic residues.

It belongs to the peptidase M4 family. Requires Zn(2+) as cofactor.

It is found in the secreted. This is Extracellular minor metalloprotease (smp) from Serratia marcescens (strain ATCC 21074 / E-15).